The sequence spans 305 residues: UDP-3-O-acyl-N-acetylglucosamine deacetylase (305 aa).

Zn(2+) is bound by residues histidine 78, histidine 237, and aspartate 241. The Proton donor role is filled by histidine 264.

It belongs to the LpxC family. It depends on Zn(2+) as a cofactor.

It carries out the reaction a UDP-3-O-[(3R)-3-hydroxyacyl]-N-acetyl-alpha-D-glucosamine + H2O = a UDP-3-O-[(3R)-3-hydroxyacyl]-alpha-D-glucosamine + acetate. It functions in the pathway glycolipid biosynthesis; lipid IV(A) biosynthesis; lipid IV(A) from (3R)-3-hydroxytetradecanoyl-[acyl-carrier-protein] and UDP-N-acetyl-alpha-D-glucosamine: step 2/6. Functionally, catalyzes the hydrolysis of UDP-3-O-myristoyl-N-acetylglucosamine to form UDP-3-O-myristoylglucosamine and acetate, the committed step in lipid A biosynthesis. This is UDP-3-O-acyl-N-acetylglucosamine deacetylase from Paraburkholderia phytofirmans (strain DSM 17436 / LMG 22146 / PsJN) (Burkholderia phytofirmans).